A 79-amino-acid polypeptide reads, in one-letter code: NADH-ubiquinone oxidoreductase chain 4 (79 aa).

Helical transmembrane passes span 24 to 44 and 54 to 74; these read SYTL…LANI and LLIN…WFLL.

This sequence belongs to the complex I subunit 4 family.

The protein resides in the mitochondrion membrane. It catalyses the reaction a ubiquinone + NADH + 5 H(+)(in) = a ubiquinol + NAD(+) + 4 H(+)(out). In terms of biological role, core subunit of the mitochondrial membrane respiratory chain NADH dehydrogenase (Complex I) that is believed to belong to the minimal assembly required for catalysis. Complex I functions in the transfer of electrons from NADH to the respiratory chain. The immediate electron acceptor for the enzyme is believed to be ubiquinone. This Simulium vittatum (Striped black fly) protein is NADH-ubiquinone oxidoreductase chain 4 (ND4).